The sequence spans 828 residues: Deubiquitinase MYSM1 (828 aa).

Over residues 1–12 (MAAEEADVDIEG) the composition is skewed to acidic residues. The segment at 1-31 (MAAEEADVDIEGDVVAAAGAQPGSGENTASV) is disordered. Serine 110 carries the post-translational modification Phosphoserine. Positions 116-167 (SYSVKWTIEEKELFEQGLAKFGRRWTKISKLIGSRTVLQVKSYARQYFKNKV) constitute an SANT domain. A Glycyl lysine isopeptide (Lys-Gly) (interchain with G-Cter in SUMO2) cross-link involves residue lysine 187. Serine 218 carries the phosphoserine modification. A Phosphothreonine modification is found at threonine 236. Serine 242, serine 267, and serine 340 each carry phosphoserine. In terms of domain architecture, SWIRM spans 372 to 470 (LKPPEQEIEI…FGCEQAVYNR (99 aa)). An MPN domain is found at 577–709 (VKVASEALLI…PLPYSQITCL (133 aa)). Histidine 656, histidine 658, and aspartate 669 together coordinate Zn(2+). Residues 656-669 (HSHPAFDPNPSLRD) carry the JAMM motif motif. The LXXLL motif motif lies at 774-778 (LQKLL).

The protein belongs to the peptidase M67A family. MYSM1 subfamily. As to quaternary structure, component of a large chromatin remodeling complex, at least composed of MYSM1, PCAF, RBM10 and KIF11/TRIP5. Binds histones. Interacts with NFIL3; this interaction is critical for their correct recruitment to the ID2 locus during natural killer cell maturation.

It is found in the nucleus. The protein localises to the cytoplasm. In terms of biological role, metalloprotease with deubiquitinase activity that plays important regulator roles in hematopoietic stem cell function, blood cell production and immune response. Participates in the normal programming of B-cell responses to antigen after the maturation process. Within the cytoplasm, plays critical roles in the repression of innate immunity and autoimmunity. Removes 'Lys-63'-linked polyubiquitins from TRAF3 and TRAF6 complexes. Attenuates NOD2-mediated inflammation and tissue injury by promoting 'Lys-63'-linked deubiquitination of RIPK2 component. Suppresses the CGAS-STING1 signaling pathway by cleaving STING1 'Lys-63'-linked ubiquitin chains. In the nucleus, acts as a hematopoietic transcription regulator derepressing a range of genes essential for normal stem cell differentiation including EBF1 and PAX5 in B-cells, ID2 in NK-cell progenitor or FLT3 in dendritic cell precursors. Deubiquitinates monoubiquitinated histone H2A, a specific tag for epigenetic transcriptional repression, leading to dissociation of histone H1 from the nucleosome. The sequence is that of Deubiquitinase MYSM1 (MYSM1) from Homo sapiens (Human).